Consider the following 71-residue polypeptide: uncharacterized protein (71 aa).

Positions 1-20 are disordered; the sequence is MQKLNKHLKKKKQKRKKMKK.

This is an uncharacterized protein from Methanocaldococcus jannaschii (strain ATCC 43067 / DSM 2661 / JAL-1 / JCM 10045 / NBRC 100440) (Methanococcus jannaschii).